Here is a 173-residue protein sequence, read N- to C-terminus: Alpha-crystallin A chain (173 aa).

The residue at position 1 (M1) is an N-acetylmethionine. The segment at 1–63 (MDIAIQHPWF…RTVLDSGISE (63 aa)) is required for complex formation with BFSP1 and BFSP2. Position 6 is a deamidated glutamine; partial (Q6). A Phosphoserine modification is found at S45. Q50 is modified (deamidated glutamine; partial). One can recognise a sHSP domain in the interval 52–162 (LFRTVLDSGI…GHSERAIPVS (111 aa)). Position 70 is an N6-acetyllysine (K70). The residue at position 90 (Q90) is a Deamidated glutamine; partial. Position 99 is an N6-acetyllysine (K99). H100 is a Zn(2+) binding site. N101 carries the deamidated asparagine; partial modification. Positions 102 and 107 each coordinate Zn(2+). S122 is subject to Phosphoserine. Position 123 is a deamidated asparagine; partial (N123). Positions 144-173 (PKVPSGVDAGHSERAIPVSREEKPSSAPSS) are disordered. Residues 153–167 (GHSERAIPVSREEKP) show a composition bias toward basic and acidic residues. H154 serves as a coordination point for Zn(2+). O-linked (GlcNAc) serine glycosylation occurs at S162.

It belongs to the small heat shock protein (HSP20) family. In terms of assembly, heteromer composed of three CRYAA and one CRYAB subunits. Inter-subunit bridging via zinc ions enhances stability, which is crucial as there is no protein turn over in the lens. Can also form homodimers and homotetramers (dimers of dimers) which serve as the building blocks of homooligomers. Within homooligomers, the zinc-binding motif is created from residues of 3 different molecules. His-100 and Glu-102 from one molecule are ligands of the zinc ion, and His-107 and His-154 residues from additional molecules complete the site with tetrahedral coordination geometry. Part of a complex required for lens intermediate filament formation composed of BFSP1, BFSP2 and CRYAA. Post-translationally, acetylation at Lys-70 may increase chaperone activity. In terms of processing, undergoes age-dependent proteolytical cleavage at the C-terminus.

It localises to the cytoplasm. It is found in the nucleus. Contributes to the transparency and refractive index of the lens. Acts as a chaperone, preventing aggregation of various proteins under a wide range of stress conditions. Required for the correct formation of lens intermediate filaments as part of a complex composed of BFSP1, BFSP2 and CRYAA. This Ovis aries (Sheep) protein is Alpha-crystallin A chain (CRYAA).